Consider the following 424-residue polypeptide: L-glutamine:scyllo-inosose aminotransferase (424 aa).

A disordered region spans residues 1 to 21 (MDSSLAISGGPRLSNREWPRW). Lys-202 bears the N6-(pyridoxal phosphate)lysine mark.

The protein belongs to the DegT/DnrJ/EryC1 family. L-glutamine:2-deoxy-scyllo-inosose/scyllo-inosose aminotransferase subfamily. Homodimer. Requires pyridoxal 5'-phosphate as cofactor.

It catalyses the reaction scyllo-inosose + L-glutamine = 1-amino-1-deoxy-scyllo-inositol + 2-oxoglutaramate. Its pathway is antibiotic biosynthesis; streptomycin biosynthesis. Functionally, catalyzes the PLP-dependent transamination of scyllo-inosose to form scyllo-inosamine. This chain is L-glutamine:scyllo-inosose aminotransferase (stsC), found in Streptomyces griseus.